An 84-amino-acid polypeptide reads, in one-letter code: ATP synthase subunit c (84 aa).

2 helical membrane-spanning segments follow: residues 9-29 and 54-74; these read IIGASILLAFAALGTAIGFAI and IVAGLLDAIAMIAVGISLLFI.

It belongs to the ATPase C chain family. As to quaternary structure, F-type ATPases have 2 components, F(1) - the catalytic core - and F(0) - the membrane proton channel. F(1) has five subunits: alpha(3), beta(3), gamma(1), delta(1), epsilon(1). F(0) has three main subunits: a(1), b(2) and c(10-14). The alpha and beta chains form an alternating ring which encloses part of the gamma chain. F(1) is attached to F(0) by a central stalk formed by the gamma and epsilon chains, while a peripheral stalk is formed by the delta and b chains.

Its subcellular location is the cell inner membrane. F(1)F(0) ATP synthase produces ATP from ADP in the presence of a proton or sodium gradient. F-type ATPases consist of two structural domains, F(1) containing the extramembraneous catalytic core and F(0) containing the membrane proton channel, linked together by a central stalk and a peripheral stalk. During catalysis, ATP synthesis in the catalytic domain of F(1) is coupled via a rotary mechanism of the central stalk subunits to proton translocation. Its function is as follows. Key component of the F(0) channel; it plays a direct role in translocation across the membrane. A homomeric c-ring of between 10-14 subunits forms the central stalk rotor element with the F(1) delta and epsilon subunits. The protein is ATP synthase subunit c of Haemophilus influenzae (strain ATCC 51907 / DSM 11121 / KW20 / Rd).